Consider the following 284-residue polypeptide: Pantothenate synthetase (284 aa).

An ATP-binding site is contributed by 30–37; the sequence is MGNLHDGH. The Proton donor role is filled by H37. Q61 contacts (R)-pantoate. Q61 provides a ligand contact to beta-alanine. 149 to 152 is a binding site for ATP; it reads GEKD. Residue Q155 coordinates (R)-pantoate. ATP-binding positions include V178 and 186 to 189; that span reads LSSR.

This sequence belongs to the pantothenate synthetase family. As to quaternary structure, homodimer.

The protein localises to the cytoplasm. The catalysed reaction is (R)-pantoate + beta-alanine + ATP = (R)-pantothenate + AMP + diphosphate + H(+). It functions in the pathway cofactor biosynthesis; (R)-pantothenate biosynthesis; (R)-pantothenate from (R)-pantoate and beta-alanine: step 1/1. Functionally, catalyzes the condensation of pantoate with beta-alanine in an ATP-dependent reaction via a pantoyl-adenylate intermediate. The polypeptide is Pantothenate synthetase (Enterobacter sp. (strain 638)).